The chain runs to 189 residues: UPF0398 protein LVIS_0849 (189 aa).

The protein belongs to the UPF0398 family.

This Levilactobacillus brevis (strain ATCC 367 / BCRC 12310 / CIP 105137 / JCM 1170 / LMG 11437 / NCIMB 947 / NCTC 947) (Lactobacillus brevis) protein is UPF0398 protein LVIS_0849.